Consider the following 344-residue polypeptide: Methionine aminopeptidase 1C, chloroplastic/mitochondrial (344 aa).

A substrate-binding site is contributed by His-172. A divalent metal cation-binding residues include Asp-189, Asp-200, and His-262. His-269 is a substrate binding site. The a divalent metal cation site is built by Glu-296 and Glu-327.

It belongs to the peptidase M24A family. Methionine aminopeptidase type 1 subfamily. Requires Co(2+) as cofactor. Zn(2+) is required as a cofactor. The cofactor is Mn(2+). Fe(2+) serves as cofactor. As to expression, ubiquitous.

The protein resides in the plastid. Its subcellular location is the chloroplast. It is found in the mitochondrion. The enzyme catalyses Release of N-terminal amino acids, preferentially methionine, from peptides and arylamides.. Its function is as follows. Removes the N-terminal methionine from nascent proteins. The N-terminal methionine is often cleaved when the second residue in the primary sequence is small and uncharged (Met-Ala-, Cys, Gly, Pro, Ser, Thr, or Val). The polypeptide is Methionine aminopeptidase 1C, chloroplastic/mitochondrial (MAP1C) (Arabidopsis thaliana (Mouse-ear cress)).